A 913-amino-acid chain; its full sequence is Bifunctional uridylyltransferase/uridylyl-removing enzyme (913 aa).

Positions 1–358 (MFNCDVTAID…PDEERPKKQP (358 aa)) are uridylyltransferase. The interval 359–729 (INARFNQVGD…EHRELALDAV (371 aa)) is uridylyl-removing. The 117-residue stretch at 476-592 (VDAHTLFLIR…TLFADLVGNV (117 aa)) folds into the HD domain. ACT domains lie at 730 to 815 (QVFV…RIPR) and 838 to 913 (IMSL…NDRV).

It belongs to the GlnD family. Requires Mg(2+) as cofactor.

The catalysed reaction is [protein-PII]-L-tyrosine + UTP = [protein-PII]-uridylyl-L-tyrosine + diphosphate. It carries out the reaction [protein-PII]-uridylyl-L-tyrosine + H2O = [protein-PII]-L-tyrosine + UMP + H(+). Its activity is regulated as follows. Uridylyltransferase (UTase) activity is inhibited by glutamine, while glutamine activates uridylyl-removing (UR) activity. In terms of biological role, modifies, by uridylylation and deuridylylation, the PII regulatory proteins (GlnB and homologs), in response to the nitrogen status of the cell that GlnD senses through the glutamine level. Under low glutamine levels, catalyzes the conversion of the PII proteins and UTP to PII-UMP and PPi, while under higher glutamine levels, GlnD hydrolyzes PII-UMP to PII and UMP (deuridylylation). Thus, controls uridylylation state and activity of the PII proteins, and plays an important role in the regulation of nitrogen assimilation and metabolism. In Psychrobacter cryohalolentis (strain ATCC BAA-1226 / DSM 17306 / VKM B-2378 / K5), this protein is Bifunctional uridylyltransferase/uridylyl-removing enzyme.